A 72-amino-acid chain; its full sequence is DNA-directed RNA polymerase subunit omega (72 aa).

It belongs to the RNA polymerase subunit omega family. In terms of assembly, the RNAP catalytic core consists of 2 alpha, 1 beta, 1 beta' and 1 omega subunit. When a sigma factor is associated with the core the holoenzyme is formed, which can initiate transcription.

It catalyses the reaction RNA(n) + a ribonucleoside 5'-triphosphate = RNA(n+1) + diphosphate. Functionally, promotes RNA polymerase assembly. Latches the N- and C-terminal regions of the beta' subunit thereby facilitating its interaction with the beta and alpha subunits. The protein is DNA-directed RNA polymerase subunit omega of Limosilactobacillus reuteri (strain DSM 20016) (Lactobacillus reuteri).